The following is a 118-amino-acid chain: Small ribosomal subunit protein uS13 (118 aa).

Residues serine 94–lysine 118 are disordered.

The protein belongs to the universal ribosomal protein uS13 family. In terms of assembly, part of the 30S ribosomal subunit. Forms a loose heterodimer with protein S19. Forms two bridges to the 50S subunit in the 70S ribosome.

Its function is as follows. Located at the top of the head of the 30S subunit, it contacts several helices of the 16S rRNA. In the 70S ribosome it contacts the 23S rRNA (bridge B1a) and protein L5 of the 50S subunit (bridge B1b), connecting the 2 subunits; these bridges are implicated in subunit movement. Contacts the tRNAs in the A and P-sites. This is Small ribosomal subunit protein uS13 from Buchnera aphidicola subsp. Acyrthosiphon pisum (strain 5A).